A 92-amino-acid chain; its full sequence is Small ribosomal subunit protein uS19 (92 aa).

This sequence belongs to the universal ribosomal protein uS19 family.

Protein S19 forms a complex with S13 that binds strongly to the 16S ribosomal RNA. The protein is Small ribosomal subunit protein uS19 of Prochlorococcus marinus (strain MIT 9215).